Consider the following 121-residue polypeptide: Small ribosomal subunit protein uS11 (121 aa).

The protein belongs to the universal ribosomal protein uS11 family. In terms of assembly, part of the 30S ribosomal subunit. Interacts with proteins S7 and S18. Binds to IF-3.

Located on the platform of the 30S subunit, it bridges several disparate RNA helices of the 16S rRNA. Forms part of the Shine-Dalgarno cleft in the 70S ribosome. The protein is Small ribosomal subunit protein uS11 of Mycoplasma pneumoniae (strain ATCC 29342 / M129 / Subtype 1) (Mycoplasmoides pneumoniae).